Here is a 243-residue protein sequence, read N- to C-terminus: MSCVTRAPMSVPQTALQPNSYVNFDAQQTSSTLLPVEVIDSVMQYLPAHDVIQSSFASYPLTLIANKIIRARLSFLDEYSLRVFAKDVYTDSPICNLSARRGLYSLQYDGYSVFHLDPNNCSSIFQISFEDDEDLASFERYPGEFLAPHINVRIHVTLSRSSCDRHQADIFSCFQDPIRVRRDWLDSIKPGQPETLWFDQNTQHVIGLIVTRVDAAPGKYDLSVTSVIVQTEYLLSCLEKRVH.

The F-box domain maps to 28 to 73 (QTSSTLLPVEVIDSVMQYLPAHDVIQSSFASYPLTLIANKIIRARL).

The protein operates within protein modification; protein ubiquitination. Probable substrate recognition component of a SCF (SKP1-CUL1-F-box protein) E3 ubiquitin-protein ligase complex that mediates the ubiquitination and subsequent proteasomal degradation of target proteins. The polypeptide is F-box protein pof15 (pof15) (Schizosaccharomyces pombe (strain 972 / ATCC 24843) (Fission yeast)).